We begin with the raw amino-acid sequence, 348 residues long: Ion-translocating oxidoreductase complex subunit D (348 aa).

A run of 4 helical transmembrane segments spans residues 23–43 (WVLACALPGLIAQTYFFGYGT), 44–64 (LIQLLLAISVAVALEAGIMLL), 72–91 (ALRDYSAVVTAWLLAVAIPP), and 126–146 (IAYVVLLISFPVQMTSWMAPI). Position 187 is an FMN phosphoryl threonine (T187). The next 5 helical transmembrane spans lie at 214–234 (FAGIGWEWVNIAYLLGGLILL), 243–263 (IPMAMLAGLVFTALLAQLFAP), 266–286 (TASPMIHLLSGATMLGAFFIA), 300–320 (LIYGFFIGAMVFLIRSWGGFP), and 321–341 (DGVAFAVLLANMCVPLIDYYT).

It belongs to the NqrB/RnfD family. In terms of assembly, the complex is composed of six subunits: RnfA, RnfB, RnfC, RnfD, RnfE and RnfG. Requires FMN as cofactor.

The protein resides in the cell inner membrane. Its function is as follows. Part of a membrane-bound complex that couples electron transfer with translocation of ions across the membrane. The chain is Ion-translocating oxidoreductase complex subunit D from Vibrio cholerae serotype O1 (strain ATCC 39315 / El Tor Inaba N16961).